The sequence spans 79 residues: Neurotoxin BmK-M9 (79 aa).

The N-terminal stretch at 1 to 14 (MISFALLLMTGVES) is a signal peptide. In terms of domain architecture, LCN-type CS-alpha/beta spans 16–78 (RDAYIAKPEN…VPIRVPGKCH (63 aa)). 4 disulfide bridges follow: C26–C77, C30–C50, C36–C60, and C40–C62. Residue R79 is a propeptide, removed by a carboxypeptidase.

It belongs to the long (4 C-C) scorpion toxin superfamily. Sodium channel inhibitor family. Alpha subfamily. Expressed by the venom gland.

The protein localises to the secreted. Binds to sodium channels (Nav) and inhibits the inactivation of the activated channels, thereby blocking neuronal transmission. This toxin is active against mammals. In Olivierus martensii (Manchurian scorpion), this protein is Neurotoxin BmK-M9.